Here is a 224-residue protein sequence, read N- to C-terminus: N-terminal Xaa-Pro-Lys N-methyltransferase 1-A (224 aa).

S-adenosyl-L-methionine-binding positions include Gly-70, Arg-75, 92-94 (DVT), 120-121 (LQ), and Gln-136.

It belongs to the methyltransferase superfamily. NTM1 family.

The protein localises to the nucleus. The catalysed reaction is N-terminal L-alanyl-L-prolyl-L-lysyl-[protein] + 3 S-adenosyl-L-methionine = N-terminal N,N,N-trimethyl-L-alanyl-L-prolyl-L-lysyl-[protein] + 3 S-adenosyl-L-homocysteine + 3 H(+). It catalyses the reaction N-terminal L-seryl-L-prolyl-L-lysyl-[protein] + 3 S-adenosyl-L-methionine = N-terminal N,N,N-trimethyl-L-seryl-L-prolyl-L-lysyl-[protein] + 3 S-adenosyl-L-homocysteine + 3 H(+). It carries out the reaction N-terminal L-prolyl-L-prolyl-L-lysyl-[protein] + 2 S-adenosyl-L-methionine = N-terminal N,N-dimethyl-L-prolyl-L-prolyl-L-lysyl-[protein] + 2 S-adenosyl-L-homocysteine + 2 H(+). Distributive alpha-N-methyltransferase that methylates the N-terminus of target proteins containing the N-terminal motif [Ala/Gly/Pro/Ser]-Pro-Lys when the initiator Met is cleaved. Specifically catalyzes mono-, di- or tri-methylation of the exposed alpha-amino group of the Ala, Gly or Ser residue in the [Ala/Gly/Ser]-Pro-Lys motif and mono- or di-methylation of Pro in the Pro-Pro-Lys motif. Required during mitosis for normal bipolar spindle formation and chromosome segregation via its action on target proteins. The chain is N-terminal Xaa-Pro-Lys N-methyltransferase 1-A (ntmt1-a) from Xenopus laevis (African clawed frog).